The chain runs to 204 residues: Protein DESIGUAL 4 (204 aa).

The next 4 membrane-spanning stretches (helical) occupy residues 13 to 33, 60 to 80, 107 to 127, and 143 to 163; these read IITV…VAGF, FVLG…ANVI, CLFL…NGIW, and VFSI…IYYI. The interval 177-204 is disordered; sequence KPNKTKPSELKPIPTEPNEAEPNSTPNP. The N-linked (GlcNAc...) asparagine glycan is linked to N179.

It belongs to the DESIGUAL family. Only expressed in inflorescences.

The protein resides in the endoplasmic reticulum membrane. The chain is Protein DESIGUAL 4 from Arabidopsis thaliana (Mouse-ear cress).